The sequence spans 1232 residues: Anion exchange protein 3 (1232 aa).

The segment covering 1–11 (MANGVIPPPGG) has biased composition (pro residues). Disordered regions lie at residues 1 to 316 (MANG…KLDR) and 429 to 498 (NDDK…GDGH). The Cytoplasmic portion of the chain corresponds to 1-708 (MANGVIPPPG…DLRDALHSQC (708 aa)). Residues 58-75 (DPEKPSRSYSERDFEFHR) show a composition bias toward basic and acidic residues. 2 stretches are compositionally biased toward basic residues: residues 76-97 (HTSH…KLRR) and 104-113 (RHTRRKRKKE). Over residues 134 to 152 (VDEEEEEEEEEEGESEAEP) the composition is skewed to acidic residues. A phosphoserine mark is found at serine 167, serine 170, serine 175, and serine 198. The span at 200–215 (QHSSSSPSPRARASRL) shows a compositional bias: low complexity. Basic and acidic residues predominate over residues 267 to 279 (DDMKSHRLEDNPG). A compositionally biased stretch (basic residues) spans 280 to 289 (VRRHLVKKPS). At arginine 295 the chain carries Omega-N-methylarginine. Residues 305 to 316 (LRRKKKKKKLDR) are compositionally biased toward basic residues. Residues 440 to 450 (NPSSSSMNSVL) show a composition bias toward polar residues. Basic and acidic residues predominate over residues 481-498 (HDPDAKEKPLHMPGGDGH). Transmembrane regions (helical) follow at residues 709–731 (VAAV…GLLG), 737–774 (LMGV…LLVF), 794–816 (VWVG…SFLV), 826–847 (IFAF…YKVF), and 893–910 (ALLS…AFFL). A membrane (anion exchange) region spans residues 709 to 1232 (VAAVLFIYFA…DEYNELHMPV (524 aa)). At 911 to 925 (RKFRNSRFLGGKARR) the chain is on the cytoplasmic side. The next 5 helical transmembrane spans lie at 926–946 (IIGD…DYSI), 980–1002 (PFPP…LIFM), 1028–1049 (LLLI…LTAA), 1083–1128 (VTGV…IQLS), and 1155–1191 (MHLF…TVPL). Cysteine 1165 is lipidated: S-palmitoyl cysteine.

It belongs to the anion exchanger (TC 2.A.31) family. In terms of tissue distribution, expressed in the heart.

It localises to the cell membrane. It carries out the reaction hydrogencarbonate(in) + chloride(out) = hydrogencarbonate(out) + chloride(in). In terms of biological role, sodium-independent anion exchanger which mediates the electroneutral exchange of chloride for bicarbonate ions across the cell membrane. May be involved in the regulation of intracellular pH, and the modulation of cardiac action potential. The polypeptide is Anion exchange protein 3 (SLC4A3) (Homo sapiens (Human)).